Here is a 131-residue protein sequence, read N- to C-terminus: Large ribosomal subunit protein bL19 (131 aa).

Basic and acidic residues predominate over residues Arg-111–Lys-124. The disordered stretch occupies residues Arg-111–Glu-131.

The protein belongs to the bacterial ribosomal protein bL19 family.

This protein is located at the 30S-50S ribosomal subunit interface and may play a role in the structure and function of the aminoacyl-tRNA binding site. This is Large ribosomal subunit protein bL19 from Methylobacterium nodulans (strain LMG 21967 / CNCM I-2342 / ORS 2060).